A 501-amino-acid polypeptide reads, in one-letter code: Arabinose import ATP-binding protein AraG (501 aa).

2 consecutive ABC transporter domains span residues Leu4–Arg239 and Leu252–Lys495. An ATP-binding site is contributed by Gly36 to Ser43.

Belongs to the ABC transporter superfamily. Arabinose importer (TC 3.A.1.2.2) family. In terms of assembly, the complex is composed of two ATP-binding proteins (AraG), two transmembrane proteins (AraH) and a solute-binding protein (AraF).

The protein localises to the cell inner membrane. The catalysed reaction is L-arabinose(out) + ATP + H2O = L-arabinose(in) + ADP + phosphate + H(+). In terms of biological role, part of the ABC transporter complex AraFGH involved in arabinose import. Responsible for energy coupling to the transport system. This Rhizobium etli (strain ATCC 51251 / DSM 11541 / JCM 21823 / NBRC 15573 / CFN 42) protein is Arabinose import ATP-binding protein AraG.